A 356-amino-acid chain; its full sequence is Alpha-N-acetylneuraminide alpha-2,8-sialyltransferase (356 aa).

Over 1 to 29 (MSPCGRARRHTSRGAMAVLAWKFPRTRLP) the chain is Cytoplasmic. Residues 30–48 (VGASALCVVVLCWLYVFPV) traverse the membrane as a helical; Signal-anchor for type II membrane protein segment. The Lumenal portion of the chain corresponds to 49 to 356 (YRLPDEKEIV…CEDNSLQPTS (308 aa)). N-linked (GlcNAc...) asparagine glycosylation is found at asparagine 71 and asparagine 119. A disulfide bridge links cysteine 138 with cysteine 287. 2 residues coordinate CMP-N-acetyl-beta-neuraminate: asparagine 143 and asparagine 166. N-linked (GlcNAc...) asparagine glycans are attached at residues asparagine 214 and asparagine 245. Residues serine 274, threonine 275, glycine 276, tryptophan 296, and histidine 310 each coordinate CMP-N-acetyl-beta-neuraminate.

It belongs to the glycosyltransferase 29 family.

Its subcellular location is the golgi apparatus membrane. It catalyses the reaction an N-acetyl-alpha-neuraminyl-(2-&gt;3)-beta-D-galactosyl derivative + CMP-N-acetyl-beta-neuraminate = an N-acetyl-alpha-neuraminyl-(2-&gt;8)-N-acetyl-alpha-neuraminyl-(2-&gt;3)-beta-D-galactosyl derivative + CMP + H(+). The catalysed reaction is a ganglioside GM3 (d18:1(4E)) + CMP-N-acetyl-beta-neuraminate = a ganglioside GD3 (d18:1(4E)) + CMP + H(+). The enzyme catalyses a ganglioside GD3 (d18:1(4E)) + CMP-N-acetyl-beta-neuraminate = a ganglioside GT3 (d18:1(4E)) + CMP + H(+). It carries out the reaction a ganglioside GD1a (d18:1(4E)) + CMP-N-acetyl-beta-neuraminate = a ganglioside GT1a (d18:1(4E)) + CMP + H(+). It catalyses the reaction a ganglioside GT1b (d18:1(4E)) + CMP-N-acetyl-beta-neuraminate = a ganglioside GQ1b (d18:1(4E)) + CMP + H(+). The catalysed reaction is a ganglioside GM1b (d18:1(4E)) + CMP-N-acetyl-beta-neuraminate = a ganglioside GD1c (d18:1(4E)) + CMP + H(+). The enzyme catalyses a ganglioside GD3 + CMP-N-acetyl-beta-neuraminate = a ganglioside GT3 + CMP + H(+). It carries out the reaction [alpha-N-acetylneuraminyl-(2-&gt;8)](n)-alpha-N-acetylneuraminyl-(2-&gt;8)-alpha-N-acetylneuraminyl-(2-&gt;3)-beta-D-galactosyl-(1-&gt;4)-beta-D-glucosyl-(1&lt;-&gt;1)-ceramide + CMP-N-acetyl-beta-neuraminate = [alpha-N-acetylneuraminyl-(2-&gt;8)](n+1)-alpha-N-acetylneuraminyl-(2-&gt;8)-alpha-N-acetylneuraminyl-(2-&gt;3)-beta-D-galactosyl-(1-&gt;4)-beta-D-glucosyl-(1&lt;-&gt;1)-ceramide + CMP + H(+). It functions in the pathway protein modification; protein glycosylation. Its pathway is lipid metabolism; sphingolipid metabolism. Functionally, catalyzes the addition of sialic acid in alpha 2,8-linkage to the sialic acid moiety of the ganglioside GM3 to form ganglioside GD3; gangliosides are a subfamily of complex glycosphingolipds that contain one or more residues of sialic acid. Can catalyze the addition of a second alpha-2,8- sialic acid to GD3 to form GT3. Can use GM1b, GD1a and GT1b as acceptor substrates to synthesize GD1c, GT1a and GQ1b respectively. This is Alpha-N-acetylneuraminide alpha-2,8-sialyltransferase from Bos taurus (Bovine).